A 185-amino-acid polypeptide reads, in one-letter code: Ribosome-recycling factor (185 aa).

The protein belongs to the RRF family.

Its subcellular location is the cytoplasm. Its function is as follows. Responsible for the release of ribosomes from messenger RNA at the termination of protein biosynthesis. May increase the efficiency of translation by recycling ribosomes from one round of translation to another. This Dehalococcoides mccartyi (strain CBDB1) protein is Ribosome-recycling factor.